Here is a 929-residue protein sequence, read N- to C-terminus: Formin-like protein 11 (929 aa).

An N-terminal signal peptide occupies residues 1-28 (MMRHCRREWLLALCLISVQLLIPTGCEG). A disordered region spans residues 153–215 (ESSTTKSIPE…KSVAEKKKDS (63 aa)). Residues 171 to 189 (KTSTPKPVNKPTDSVSSPP) show a composition bias toward polar residues. The span at 191-215 (RSYKSAPTEKENPPTKSVAEKKKDS) shows a compositional bias: basic and acidic residues. The chain crosses the membrane as a helical span at residues 222–242 (FIGLSIAGIALMAHLCLCCFM). 2 disordered regions span residues 372–472 (PVGS…ENSN) and 726–749 (AAKE…SEQT). Over residues 382–447 (MQPPVMPPPI…GPPRPPPPAM (66 aa)) the composition is skewed to pro residues. Positions 468–898 (VENSNEAKTK…KAKAKQPSQS (431 aa)) constitute an FH2 domain. Basic and acidic residues predominate over residues 738–749 (KTDDLGDKSEQT).

The protein belongs to the formin-like family. Class-I subfamily.

It is found in the membrane. The protein is Formin-like protein 11 (FH11) of Oryza sativa subsp. japonica (Rice).